We begin with the raw amino-acid sequence, 275 residues long: Integrase homolog (275 aa).

Positions 88–111 are enriched in basic and acidic residues; it reads RVSQDRQAQGRERRSVLLPQERRG. The segment at 88–120 is disordered; that stretch reads RVSQDRQAQGRERRSVLLPQERRGSSGRQPLYS.

It belongs to the 'phage' integrase family.

Integrase-recombinase proteins are responsible for catalyzing strand exchange between DNA molecules and play an important role in the DNA replication. In terms of biological role, may be required for the formation of concatameric complex replicative intermediates and/or their resolution before encapsidation. The protein is Integrase homolog (INT) of Dryophytes versicolor (chameleon treefrog).